Consider the following 893-residue polypeptide: DNA endonuclease RBBP8 (893 aa).

The segment at 22 to 45 (ELWTKLKEYHDKEVQGLQVKVTKL) is essential for binding to the MRN complex and for RPA focus formation on DNA damage. The stretch at 35 to 84 (VQGLQVKVTKLKKERILDAQRLEEFFTKNQQLRDQQKVLQETIKILEDRL) forms a coiled coil. Residues 45–160 (LKKERILDAQ…AELACEENII (116 aa)) form a required for interaction with LMO4, probably by stabilizing the interaction through RPPB8 dimerization region. Glycyl lysine isopeptide (Lys-Gly) (interchain with G-Cter in SUMO2) cross-links involve residues lysine 62 and lysine 115. A coiled-coil region spans residues 117–138 (ITELMNEKNTLQEENKKLSEQL). Lysine 193 is covalently cross-linked (Glycyl lysine isopeptide (Lys-Gly) (interchain with G-Cter in SUMO2)). 2 positions are modified to phosphoserine: serine 233 and serine 276. A compositionally biased stretch (basic and acidic residues) spans 296 to 307 (MESARSKEDSLR). Positions 296 to 324 (MESARSKEDSLRFSDSASKTPPQEFTTRA) are disordered. Positions 308–324 (FSDSASKTPPQEFTTRA) are enriched in polar residues. Threonine 315 bears the Phosphothreonine mark. Residues serine 325, serine 326, and serine 348 each carry the phosphoserine modification. Glycyl lysine isopeptide (Lys-Gly) (interchain with G-Cter in SUMO2) cross-links involve residues lysine 359 and lysine 377. Residue serine 378 is modified to Phosphoserine. Residues lysine 394, lysine 403, lysine 409, and lysine 437 each participate in a glycyl lysine isopeptide (Lys-Gly) (interchain with G-Cter in SUMO2) cross-link. The PXDLS motif motif lies at 489–493 (PLDLS). The tract at residues 508 to 556 (NETSKNKLKQATIYEALKPIPKGSSSGRKALSGDCMPAKDSWETYCLQP) is damage-recruitment motif. A Glycyl lysine isopeptide (Lys-Gly) (interchain with G-Cter in SUMO2); alternate cross-link involves residue lysine 525. Glycyl lysine isopeptide (Lys-Gly) (interchain with G-Cter in SUMO2) cross-links involve residues lysine 529, lysine 570, and lysine 576. Lysine 602 is covalently cross-linked (Glycyl lysine isopeptide (Lys-Gly) (interchain with G-Cter in SUMO2); alternate). Glycyl lysine isopeptide (Lys-Gly) (interchain with G-Cter in SUMO2) cross-links involve residues lysine 611, lysine 636, and lysine 638. The interval 639-683 (ALPSNQDTSFENIQWSVDPGADLSQYKMDVTVIDTKDSSHSRLGG) is required for interaction with LMO4, probably by making physical contact with LMO4. At serine 662 the chain carries Phosphoserine; by ATM. Lysine 674 is covalently cross-linked (Glycyl lysine isopeptide (Lys-Gly) (interchain with G-Cter in SUMO2)). The residue at position 677 (serine 677) is a Phosphoserine. A Glycyl lysine isopeptide (Lys-Gly) (interchain with G-Cter in SUMO2) cross-link involves residue lysine 716. Residue serine 720 is modified to Phosphoserine. At serine 742 the chain carries Phosphoserine; by ATM. Lysine 778 participates in a covalent cross-link: Glycyl lysine isopeptide (Lys-Gly) (interchain with G-Cter in SUMO2). A KLHL15-binding motif is present at residues 836 to 838 (FRY). Phosphothreonine occurs at positions 843 and 855. A Glycyl lysine isopeptide (Lys-Gly) (interchain with G-Cter in SUMO2) cross-link involves residue lysine 865. The interval 869–893 (DLSPRPKRRQPYNAVFSPKGKEQRT) is disordered.

This sequence belongs to the COM1/SAE2/CtIP family. As to quaternary structure, homotetramer; formed by antiparallel association of helical extensions protruding from the N-termini of two parallel coiled-coil dimers. Forms a dumbbell-shaped particle in which polar globular domains are held about 30 nm apart by a central rod. Homotetramerization is required for DNA-end resection and repair. Interacts (via the PXDLS motif) with CTBP1; the interaction is disrupted via binding of the adenovirus E1A to CTBP1. Component of the BRCA1-RBBP8 complex. Interacts (the Ser-326 phosphorylated form) with BRCA1 (via the C-terminal BRCT domains): the interaction occurs in the G2 phase, ubiquitinates RBBP8 and involves RBBP8 in BRCA1-dependent G2/M checkpoint control on DNA damage. Interacts with RB1. Interacts with the MRN complex. Interacts directly with MRE11; the interaction is required for efficient homologous recombination (HR) and regulation of the MRN complex. Interacts (when phosphorylated by CDK1) with NBN; promoting association with the MRN complex. Interacts with LMO4 (via the LIM zinc-binding 1 domain). Interacts with SIAH1. Interacts with RNF138. Interacts with EXD2. Interacts with CUL3 and KLHL15; this interaction leads to RBBP8 proteasomal degradation. Directly interacts with PIN1; this interaction depends upon RBBP8 phosphorylation, predominantly at Thr-315. Interacts with FZR1; this interaction leads to APC/C-mediated RBBP8 proteasomal degradation. Interacts with AUNIP; leading to recruit RBBP8 to sites of DNA damage. Interacts with SAMHD1. Interacts with HDGFL2. In terms of processing, hyperphosphorylation upon ionizing radiation results in dissociation from BRCA1. Phosphorylation at Thr-843 by CDK1 is essential for the recruitment to DNA and the DNA repair function. Phosphorylation at Thr-843 and Thr-855 promote interaction with NBN and recruitment to double-strand breaks (DSBs). Phosphorylated on Ser-326 as cells enter G2 phase. Phosphorylated at Ser-326 as cells enter G2 phase. This phosphorylation is required for binding BRCA1 and for the G2/M DNA damage transition checkpoint control. Phosphorylation at Thr-315 is required for PIN1-binding, while phosphorylation at Ser-276 serves as a PIN1 isomerization site. Phosphorylation at Thr-315 is cell-cycle dependent. It steadily increases during S phase, peaks at late S/G2 phase, and drops at G1. Phosphorylation is not required for tetramerization. Binds to DNA more strongly when dephosphorylated. Ubiquitinated. Ubiquitination at multiple sites by BRCA1 (via its N-terminal RING domain) does not lead to its proteasomal degradation but instead the ubiquitinated RBBP8 binds to chromatin following DNA damage and may play a role in G2/M checkpoint control. Ubiquitinated by RNF138 at its N-terminus. Ubiquitinated through 'Lys-48' by the E3 CUL3-KLHL15 complex; this modification leads to proteasomal degradation. Ubiquitinated by the E3 FZR1/APC/C complex; this modification leads to proteasomal degradation.

Its subcellular location is the nucleus. The protein resides in the chromosome. Its function is as follows. Endonuclease that cooperates with the MRE11-RAD50-NBN (MRN) complex in DNA-end resection, the first step of double-strand break (DSB) repair through the homologous recombination (HR) pathway. HR is restricted to S and G2 phases of the cell cycle and preferentially repairs DSBs resulting from replication fork collapse. Key determinant of DSB repair pathway choice, as it commits cells to HR by preventing classical non-homologous end-joining (NHEJ). Specifically promotes the endonuclease activity of the MRN complex to clear DNA ends containing protein adducts: recruited to DSBs by NBN following phosphorylation by CDK1, and promotes the endonuclease activity of MRE11 to clear protein-DNA adducts and generate clean double-strand break ends. Functions downstream of the MRN complex and ATM, promotes ATR activation and its recruitment to DSBs in the S/G2 phase facilitating the generation of ssDNA. Component of the BRCA1-RBBP8 complex that regulates CHEK1 activation and controls cell cycle G2/M checkpoints on DNA damage. During immunoglobulin heavy chain class-switch recombination, promotes microhomology-mediated alternative end joining (A-NHEJ) and plays an essential role in chromosomal translocations. Binds preferentially to DNA Y-junctions and to DNA substrates with blocked ends and promotes intermolecular DNA bridging. This chain is DNA endonuclease RBBP8 (Rbbp8), found in Mus musculus (Mouse).